The chain runs to 240 residues: MGKRLISQNRGRGTPKYRSPSHKRKGAVKYRSYDEMEKDGKILGTVVDILHDPGRSAPVAKVRFANDEERLVLIPEGIQVGEEIECGISAEIKPGNVLPLGEIPEGIPVYNIETIPGDGGKLVRSGGCYAHVVSHDVGKTIVKLPSGFSKVLNPACRATVGVVAGGGRKEKPFVKAGKKHHSLSAKAIAWPKVRGVAMNAVDHPYGGGRHQHLGKPSSVSRHTSPGRKVGHIASRRTGRK.

Residues 1–11 (MGKRLISQNRG) show a composition bias toward polar residues. 2 disordered regions span residues 1–31 (MGKR…VKYR) and 206–240 (GGGR…TGRK). Composition is skewed to basic residues over residues 13 to 28 (GTPK…KGAV) and 224 to 240 (SPGR…TGRK).

The protein belongs to the universal ribosomal protein uL2 family. In terms of assembly, part of the 50S ribosomal subunit. Forms a bridge to the 30S subunit in the 70S ribosome.

One of the primary rRNA binding proteins. Required for association of the 30S and 50S subunits to form the 70S ribosome, for tRNA binding and peptide bond formation. It has been suggested to have peptidyltransferase activity; this is somewhat controversial. Makes several contacts with the 16S rRNA in the 70S ribosome. This chain is Large ribosomal subunit protein uL2, found in Methanococcus maripaludis (strain C6 / ATCC BAA-1332).